A 415-amino-acid chain; its full sequence is MTTMSNLPAEVLEEILSRTPVTSLRTMRSTCKKWNNLSKKKIIPEAARKQQGLMLIKKKICSLSFSLHEIHKDDYVVPCINQVDIPRNIEVEKIFHCDGILLCVIEDNCSLLVWNPYLGQTRRIEVSSDADMNDRYALGYDNNNSSHKILRIKKDFKNSDGLGYEIYRFASNSWSLLDEEVMKPEWDVWSVQRSSVSLKGNTYFLLQGNDYDDQEDEEEEDDEEYEDDDDVLPKDNFLLCFDYTTERFGPRLLLPFNPHVEETVALSCIGEERLVMLYQSFKTYKGIEIWVTDKIDPKAVSWSKFLKVDITPLTGFPVDFYADSFVIDEEKKVAAVFDIHCSYQKAHIIGEDGYLKCVNMGRASDVGNGQPLVFSSYVPSLVKVPVKQPKGKRKGRSSETKSNKNKKGRKIKIIG.

The F-box domain occupies 1–50 (MTTMSNLPAEVLEEILSRTPVTSLRTMRSTCKKWNNLSKKKIIPEAARKQ). 2 disordered regions span residues 209–229 (NDYD…EDDD) and 387–415 (KQPK…KIIG). The span at 210–229 (DYDDQEDEEEEDDEEYEDDD) shows a compositional bias: acidic residues. Residues 403-415 (NKNKKGRKIKIIG) are compositionally biased toward basic residues.

The sequence is that of F-box protein At3g13820 from Arabidopsis thaliana (Mouse-ear cress).